A 275-amino-acid polypeptide reads, in one-letter code: Formamidopyrimidine-DNA glycosylase (275 aa).

The Schiff-base intermediate with DNA role is filled by Pro-2. Glu-3 acts as the Proton donor in catalysis. The Proton donor; for beta-elimination activity role is filled by Lys-58. Residues His-91 and Arg-110 each coordinate DNA. The FPG-type zinc finger occupies 238-272 (QVYGQTGKPCPRCGQAIVKLKVGGRGTHICPKCQK). Residue Arg-262 is the Proton donor; for delta-elimination activity of the active site.

The protein belongs to the FPG family. Monomer. The cofactor is Zn(2+).

It carries out the reaction Hydrolysis of DNA containing ring-opened 7-methylguanine residues, releasing 2,6-diamino-4-hydroxy-5-(N-methyl)formamidopyrimidine.. It catalyses the reaction 2'-deoxyribonucleotide-(2'-deoxyribose 5'-phosphate)-2'-deoxyribonucleotide-DNA = a 3'-end 2'-deoxyribonucleotide-(2,3-dehydro-2,3-deoxyribose 5'-phosphate)-DNA + a 5'-end 5'-phospho-2'-deoxyribonucleoside-DNA + H(+). Involved in base excision repair of DNA damaged by oxidation or by mutagenic agents. Acts as a DNA glycosylase that recognizes and removes damaged bases. Has a preference for oxidized purines, such as 7,8-dihydro-8-oxoguanine (8-oxoG). Has AP (apurinic/apyrimidinic) lyase activity and introduces nicks in the DNA strand. Cleaves the DNA backbone by beta-delta elimination to generate a single-strand break at the site of the removed base with both 3'- and 5'-phosphates. The protein is Formamidopyrimidine-DNA glycosylase of Streptococcus pyogenes serotype M28 (strain MGAS6180).